The chain runs to 201 residues: Regulator of G-protein signaling 1 (201 aa).

The region spanning 75–191 (SLEKLLVSEE…LKSEIFFRLA (117 aa)) is the RGS domain.

The protein resides in the cell membrane. The protein localises to the cytoplasm. It is found in the cytosol. Regulates G protein-coupled receptor signaling cascades, including signaling downstream of the N-formylpeptide chemoattractant receptors and leukotriene receptors. Inhibits B cell chemotaxis. Inhibits signal transduction by increasing the GTPase activity of G protein alpha subunits, thereby driving them into their inactive GDP-bound form. This is Regulator of G-protein signaling 1 (rgs1) from Xenopus laevis (African clawed frog).